Reading from the N-terminus, the 594-residue chain is Putative phospholipase B-like 2 (594 aa).

Positions 1 to 46 are cleaved as a signal peptide; that stretch reads MAAPVDGSSGGWAARALRRALALTSLTTLALLASLTGLLLSGPAGA. 2 N-linked (GlcNAc...) asparagine glycosylation sites follow: Asn93 and Asn115. A disulfide bridge links Cys147 with Cys157. N-linked (GlcNAc...) asparagine glycosylation is found at Asn236 and Asn441. A disulfide bridge connects residues Cys497 and Cys500. N-linked (GlcNAc...) asparagine glycosylation is present at Asn520.

It belongs to the phospholipase B-like family. In terms of assembly, interacts with IGF2R. Post-translationally, the p76 protein is synthesized as a 76 kDa precursor which is then processed into a N-terminal 28 kDa form and a C-terminal 40 kDa form. The C-terminal peptide is further processed into a 15 kDa form. In terms of processing, glycosylated; contains mannose 6-phosphate sugars. In terms of tissue distribution, present at highest levels in spleen, lung and brain (at protein level).

The protein localises to the lysosome lumen. In terms of biological role, putative phospholipase. The chain is Putative phospholipase B-like 2 (Plbd2) from Mus musculus (Mouse).